The following is a 465-amino-acid chain: UDP-N-acetylmuramate--L-alanine ligase (465 aa).

118–124 (GTHGKTT) provides a ligand contact to ATP.

It belongs to the MurCDEF family.

It localises to the cytoplasm. It carries out the reaction UDP-N-acetyl-alpha-D-muramate + L-alanine + ATP = UDP-N-acetyl-alpha-D-muramoyl-L-alanine + ADP + phosphate + H(+). Its pathway is cell wall biogenesis; peptidoglycan biosynthesis. Its function is as follows. Cell wall formation. The sequence is that of UDP-N-acetylmuramate--L-alanine ligase from Ruegeria pomeroyi (strain ATCC 700808 / DSM 15171 / DSS-3) (Silicibacter pomeroyi).